Reading from the N-terminus, the 670-residue chain is Probable urocanate hydratase (670 aa).

Residues 126-127 (GG), Q204, 250-252 (GMS), E270, 316-317 (NV), 338-342 (QTSLH), 349-350 (FY), Y398, and G590 each bind NAD(+).

This sequence belongs to the urocanase family. It depends on NAD(+) as a cofactor.

The catalysed reaction is 4-imidazolone-5-propanoate = trans-urocanate + H2O. Its pathway is amino-acid degradation; L-histidine degradation into L-glutamate; N-formimidoyl-L-glutamate from L-histidine: step 2/3. This chain is Probable urocanate hydratase, found in Caenorhabditis elegans.